A 106-amino-acid chain; its full sequence is Immunoglobulin lambda constant 2 (106 aa).

An Ig-like domain is found at 7–101 (PSVTLFPPSS…EGSTVEKTVA (95 aa)). A disulfide bridge connects residues C28 and C87.

Immunoglobulins are composed of two identical heavy chains and two identical light chains; disulfide-linked.

It localises to the secreted. Its subcellular location is the cell membrane. Constant region of immunoglobulin light chains. Immunoglobulins, also known as antibodies, are membrane-bound or secreted glycoproteins produced by B lymphocytes. In the recognition phase of humoral immunity, the membrane-bound immunoglobulins serve as receptors which, upon binding of a specific antigen, trigger the clonal expansion and differentiation of B lymphocytes into immunoglobulins-secreting plasma cells. Secreted immunoglobulins mediate the effector phase of humoral immunity, which results in the elimination of bound antigens. The antigen binding site is formed by the variable domain of one heavy chain, together with that of its associated light chain. Thus, each immunoglobulin has two antigen binding sites with remarkable affinity for a particular antigen. The variable domains are assembled by a process called V-(D)-J rearrangement and can then be subjected to somatic hypermutations which, after exposure to antigen and selection, allow affinity maturation for a particular antigen. The polypeptide is Immunoglobulin lambda constant 2 (Homo sapiens (Human)).